Reading from the N-terminus, the 546-residue chain is MAAKEVKFGSDARAKMLRGVDILADAVKVTLGPKGRNVVIEKSFGAPRITKDGVTVAKEIELSDKFENMGAQMVKEVAQKTADLAGDGTTTATVLAQAIVREGAKAIAAGMNPMDVKRGVDVAVQTVVDDIKSRSRKVTTNDEIAQVGTISANGEAEIGKMIAEAMQKVGNEGVITVEEAKALETELDVVEGMQFDRGYLSPYFVTNADKMVAELESPYILLFEKKLSGLQAMLPVLEAVVQSSRPLLIVAEDVEGEALATLVVNKLRGGLKVAAVKAPGFGDRRKAMLEDMAILTGGQVVSEDLGIKLENVSLEMLGQAKKVVITKDNTTIVDGAGSKEDIQARIVQIKAQIEETTSDYDREKLQERLAKLAGGVAVIRVGGATEVEVKERKDRVDDAMHATRAAVEEGIVAGGGVALLYATKALDKLTAVNEDQKFGIDIVRKALQAPVRQIAQNAGFDGSVIVGKLLEKGETNFGFNAQAGEYGDMFKFGVIDPTKVVRAALQDAASVAGLLITTEAMIGEKPEKKAPAGAPGGMGGMGDMDF.

Residues 30–33, lysine 51, 87–91, glycine 415, and aspartate 496 contribute to the ATP site; these read TLGP and DGTTT. Positions 527–546 are disordered; sequence EKKAPAGAPGGMGGMGDMDF. Residues 534-546 show a composition bias toward gly residues; it reads APGGMGGMGDMDF.

Belongs to the chaperonin (HSP60) family. As to quaternary structure, forms a cylinder of 14 subunits composed of two heptameric rings stacked back-to-back. Interacts with the co-chaperonin GroES.

It is found in the cytoplasm. The catalysed reaction is ATP + H2O + a folded polypeptide = ADP + phosphate + an unfolded polypeptide.. Its function is as follows. Together with its co-chaperonin GroES, plays an essential role in assisting protein folding. The GroEL-GroES system forms a nano-cage that allows encapsulation of the non-native substrate proteins and provides a physical environment optimized to promote and accelerate protein folding. This is Chaperonin GroEL from Rhodospirillum centenum (strain ATCC 51521 / SW).